Here is a 476-residue protein sequence, read N- to C-terminus: Glycogen synthase (476 aa).

Residue lysine 15 coordinates ADP-alpha-D-glucose.

It belongs to the glycosyltransferase 1 family. Bacterial/plant glycogen synthase subfamily.

It carries out the reaction [(1-&gt;4)-alpha-D-glucosyl](n) + ADP-alpha-D-glucose = [(1-&gt;4)-alpha-D-glucosyl](n+1) + ADP + H(+). It functions in the pathway glycan biosynthesis; glycogen biosynthesis. Its function is as follows. Synthesizes alpha-1,4-glucan chains using ADP-glucose. The chain is Glycogen synthase from Bacillus cereus (strain B4264).